A 228-amino-acid polypeptide reads, in one-letter code: Translation initiation factor 6 (228 aa).

This sequence belongs to the eIF-6 family.

In terms of biological role, binds to the 50S ribosomal subunit and prevents its association with the 30S ribosomal subunit to form the 70S initiation complex. This is Translation initiation factor 6 from Thermococcus gammatolerans (strain DSM 15229 / JCM 11827 / EJ3).